We begin with the raw amino-acid sequence, 475 residues long: Aspartyl/glutamyl-tRNA(Asn/Gln) amidotransferase subunit B (475 aa).

The protein belongs to the GatB/GatE family. GatB subfamily. In terms of assembly, heterotrimer of A, B and C subunits.

It carries out the reaction L-glutamyl-tRNA(Gln) + L-glutamine + ATP + H2O = L-glutaminyl-tRNA(Gln) + L-glutamate + ADP + phosphate + H(+). The enzyme catalyses L-aspartyl-tRNA(Asn) + L-glutamine + ATP + H2O = L-asparaginyl-tRNA(Asn) + L-glutamate + ADP + phosphate + 2 H(+). In terms of biological role, allows the formation of correctly charged Asn-tRNA(Asn) or Gln-tRNA(Gln) through the transamidation of misacylated Asp-tRNA(Asn) or Glu-tRNA(Gln) in organisms which lack either or both of asparaginyl-tRNA or glutaminyl-tRNA synthetases. The reaction takes place in the presence of glutamine and ATP through an activated phospho-Asp-tRNA(Asn) or phospho-Glu-tRNA(Gln). This chain is Aspartyl/glutamyl-tRNA(Asn/Gln) amidotransferase subunit B, found in Macrococcus caseolyticus (strain JCSC5402) (Macrococcoides caseolyticum).